A 290-amino-acid polypeptide reads, in one-letter code: MTQQLPILSLKKIYSGKVRDLYEIDDKRMLMVASDRLSAFDVILDDPIPRKGEILTQISNFWFNKLAHIMPNHFTGDSVYDVLPKEEADLIRDRAVVCKRLNPIKIESIVRGYLTGSGLKDYKQTGTICGLKLPEGLVEASKLPEAIFTPSSKEEVGNHDINISYAECEKLIGADLAAQVKEKAIALYTVAAEYALTKGIIICDTKFEFGLDENGTLTLMDEVLTPDSSRFWSVDTYQAGTNPPSFDKQFVRDWLENSGWNKQAPVPKVPENIIQKTVDKYQEALDLLTK.

This sequence belongs to the SAICAR synthetase family.

The catalysed reaction is 5-amino-1-(5-phospho-D-ribosyl)imidazole-4-carboxylate + L-aspartate + ATP = (2S)-2-[5-amino-1-(5-phospho-beta-D-ribosyl)imidazole-4-carboxamido]succinate + ADP + phosphate + 2 H(+). It functions in the pathway purine metabolism; IMP biosynthesis via de novo pathway; 5-amino-1-(5-phospho-D-ribosyl)imidazole-4-carboxamide from 5-amino-1-(5-phospho-D-ribosyl)imidazole-4-carboxylate: step 1/2. In Haemophilus influenzae (strain PittGG), this protein is Phosphoribosylaminoimidazole-succinocarboxamide synthase.